Consider the following 248-residue polypeptide: Cutinase (248 aa).

Positions 1 to 17 are cleaved as a signal peptide; it reads MRSLAILTTLLAGHAFA. A propeptide spanning residues 18–28 is cleaved from the precursor; the sequence is YPKPAPQSVNR. The segment at 31–70 is lid covering the active site of the uncomplexed enzyme; the sequence is WPSINEFLSELAKVMPIGDTITAACDLISDGEDAAASLFG. Intrachain disulfides connect C55–C91 and C79–C153. S164 acts as the Nucleophile in catalysis. The cysteines at positions 212 and 219 are disulfide-linked. D216 is a catalytic residue. H229 (proton donor/acceptor) is an active-site residue.

Belongs to the cutinase family.

The protein resides in the secreted. It carries out the reaction cutin + H2O = cutin monomers.. Weakly inhibited by n-undecyl phosphonate (C11Y4). Activity unaffected by paraoxon. Its function is as follows. Catalyzes the hydrolysis of complex carboxylic polyesters found in the cell wall of plants. Degrades cutin, a macromolecule that forms the structure of the plant cuticle. The chain is Cutinase from Hypocrea jecorina (strain QM6a) (Trichoderma reesei).